Here is a 526-residue protein sequence, read N- to C-terminus: GMP synthase [glutamine-hydrolyzing] (526 aa).

The Glutamine amidotransferase type-1 domain occupies R10–L208. The active-site Nucleophile is the C87. Residues H182 and E184 contribute to the active site. The GMPS ATP-PPase domain maps to W209 to R401. Residue S236–S242 coordinates ATP.

Homodimer.

It carries out the reaction XMP + L-glutamine + ATP + H2O = GMP + L-glutamate + AMP + diphosphate + 2 H(+). It functions in the pathway purine metabolism; GMP biosynthesis; GMP from XMP (L-Gln route): step 1/1. Catalyzes the synthesis of GMP from XMP. This Hydrogenovibrio crunogenus (strain DSM 25203 / XCL-2) (Thiomicrospira crunogena) protein is GMP synthase [glutamine-hydrolyzing].